Reading from the N-terminus, the 272-residue chain is MSNIAESARIHPMAVVEDGATIGEGVKIGPFCHVGPHVVLHANVELLAHAVVTGRTVVGKGTRIFPMAVVGGDPQSVHHGGEDTTLTVGANCTIREGVTMNTGTADFGGRTIVGDNNLFLANSHVAHDCRVGNHVIMSNNVMLAGHVVIEDRVILGGGSAVHQFTRVGRHAFVGGLSAVSYDVIPYGMLNGNPGLLGGLNVVGMTRAGIDRAVIHRVRRAYKAIFEGTGSVRENAAAIRDEYADCEQVVQILDFIAADSDRALSSPTRGQKG.

It belongs to the transferase hexapeptide repeat family. LpxA subfamily. Homotrimer.

The protein localises to the cytoplasm. The enzyme catalyses a (3R)-hydroxyacyl-[ACP] + UDP-N-acetyl-alpha-D-glucosamine = a UDP-3-O-[(3R)-3-hydroxyacyl]-N-acetyl-alpha-D-glucosamine + holo-[ACP]. Its pathway is glycolipid biosynthesis; lipid IV(A) biosynthesis; lipid IV(A) from (3R)-3-hydroxytetradecanoyl-[acyl-carrier-protein] and UDP-N-acetyl-alpha-D-glucosamine: step 1/6. Functionally, involved in the biosynthesis of lipid A, a phosphorylated glycolipid that anchors the lipopolysaccharide to the outer membrane of the cell. In Rhizobium etli (strain ATCC 51251 / DSM 11541 / JCM 21823 / NBRC 15573 / CFN 42), this protein is Acyl-[acyl-carrier-protein]--UDP-N-acetylglucosamine O-acyltransferase.